The following is a 188-amino-acid chain: dCTP deaminase (188 aa).

Residues 111-116 (KSTYAR), 135-137 (TLE), Q156, Y170, and Q180 each bind dCTP. Catalysis depends on E137, which acts as the Proton donor/acceptor.

Belongs to the dCTP deaminase family. Homotrimer.

The enzyme catalyses dCTP + H2O + H(+) = dUTP + NH4(+). It participates in pyrimidine metabolism; dUMP biosynthesis; dUMP from dCTP (dUTP route): step 1/2. In terms of biological role, catalyzes the deamination of dCTP to dUTP. This chain is dCTP deaminase, found in Pseudomonas fluorescens (strain Pf0-1).